We begin with the raw amino-acid sequence, 2497 residues long: MTPEPIAIIGSGCKFPGSSTSPSRLWDLISKPKDVASKPPADRFNIDGFYHPNPTNLLTTNAKESYFISENVRAFDNTFFNIAANEATSLDPQQRLLLETVYESVEAAGLRLEALRGSSTGVFCGVMCADWEAVVGLDKVVPEYAISGLARSNLANRISYFFDWNGPSMSIDTACSSSMVALHQGITALQSGECSAVAVIGTNLILTPNLYFAASNVHMLSPESRGRMWDHKANGYVRGEGVASLMLKRLSDAVADGDRIECVIRASGVNQDGRTLGLTMPSGEAQEKLIRSTYALAGLDPSRAEDRPQYFEAHGTGTQAGDYQEASGIYNTFFGANPKASAEEVLHVGSIKTVIGHSEGCAGLAGLIKASLCIQHGLIPPNLHFERLNPKLEPYSSHLKVPTALTKWPELPSGVPRRVSVNSFGFGGTNSHAILESYEPNLHGTTNGHVNGTSKKTNGLLNGASNLLDSLTNGEESTKPALLPFVFSAASEKTLGALLEKYDSYLGENPNVEAMDLAWSLIQKRSALMYRVTLYAPTIEGLQSEIQRELALRKANTPSTVISRPDTGKKRILGIFTGQGAQWPQMGLDIISTFPNARVWFEELQASLDSLPTAHKPDFSLLEELSAPKPSSRVQEAAVAQPICTAVQIVLVKLLSAIGISFDQVVGHSSGEVAAAYAAGVLNAHDAIRIAYLRGRVAHLAGANDKAGGMLAAGLSIEEATAFCELPEFAGRIMIAACNSPSSVTLSGDADAIQEAEKHLKGQDKFARRVLVDTAYHSHHMEPCSDPYLSAMTGCKIQLGEPTATTWYSTVYEGEKPNSSSHANALVGEYWKDNMRNPVLFYQALMQSITDAPPSLIVEVGPHPALKGPVLQAISEAVQTNSTIPYISTLSRGATGVKALAVTIGSLWTHLGAEGVKVEQYVALREPSRKLKFIHDLPSYPFDHSQSYWTETRRSKAYLGRGPRHELLGDLSEENTEGEWRWRNFLFRSNLEYLEGHQIQAQTIFPATGYVAMAFEAAGIMAEGRSMRLVQINDLEIDQAIAFLDDVKGIETLFRVYQIRSDGNVTNAAFSCHADIGGTLKTCASGQLVVTWGEMEANLLPSKLPSPSGMSVVDTDEFYASLGKLGYGYTGLFRGITSLKRKLNTSSGFLDNVGSEELLLHPSTMDCGLQCLLAAVGAPGDGELSRLQIPTRIQTTVINPIFCGKNNVLVGDSLEFEAAVTGLSADGASGDVSLFTRDGPGLIQFEGVHVTPLMQPTASDDRPMFSEITWGGLLPNAEPLHGPAPPLQFWAGNMDDPQHMCFAVIQEVLSKLTAEDRQRLEGYRVDVVEWFDHVVEQTRLGENPLCMKEWVDEDPTEALIHLAKTAQPIIVEITDVIRKHFLNFLRGETPMIEVYRQDNLLTRFYDQEQELKYMSLRVGDVAGQLAFRYPRMKILEIGAGTGSATRAVLGRIGQYFHSYTFTDISAGFFEDAEATFTEYADRMVYRVLDIEQDPTGQGFDANSYDLVIAANVLHATKYLEPTMNNVRRLLKPGGHLIALEITNEHILQDALLFSAFEGWWLGKHDNRPWGPKISVPKWEELLRKTGFGGVQSILPAPEKTEYSFWGYSTFVTQAINDRLEQLSEPSASDPATSIISTSDSSEKFGTLMIIGGVTDKTSYLVPALKKLLAPSFERIIHTLTIDSIEYQDASLAAALCLADMDVPTFQDLTDNKISCLKRLLEVGRRLLWVTAGSESENPYLSMSKGFLSCIGYEYEGSIHQYLNIVDPEAVNAQILSTTLMRMLLSDSTNDYSLSTGVGSIELELRLEDNVMKIPRIMNATPLNHRYAAGQRAVYSQADLEKSTVQIRSVQGNLEFFEGPVEGSTETQLDQGQSTIPVHVRYSASLALKVQNGGFLNLVLGTHEVSNVRLIAFSDNNASRVSVPSALCWELTNNIAEDQEAQFLNIMASAVLARNIIQTASTNTSLLVHEANDALRHAIWTQAVAKGVQPYFSTSDTSKKQSNSSTLVFHETSSTRALARILPTGLSVIANFGKAAPNGVMAKIKPLLSPDVTQEDTGTLYRVSPLLSKGFNLDEVTQTFKVSRIVATEVMHSLANNFAAVHGETNVISIDKLSGRDAKTGELEILDWTQARELPVRVSSASSQVKLSASKTYLLVASRTPKVEPQWLDEMSRLGARVRIEPMDVTDRESILSVDRTIRRTLPPIGGVVNGAMVLQDRMFADATLDNILGTYKPKVQGSRLLEDIYGDEDLDFFILFGSATAILGNMGQSSYGAATNFMRSLIRGRRERNLVGSIIHPAEVRGVGYISRMGIELSRLMNKLVGSHIVSEKDLHETFAEAILAGKPASGRNPEVISGFNQHDPEEIPDLIWYSNPETWPLVNYRLQSTTSQSTSTLMPIKQQLESATSLAEAAELVLIALNAKIVQKLHLSEDTHMTPDTRLAELGADSLVAVDLRTWFIRELDVEIPILQIQSGASIGDLANSATSKISDSLIPNVKR.

Positions 3-437 (PEPIAIIGSG…GTNSHAILES (435 aa)) constitute a Ketosynthase family 3 (KS3) domain. Residues Cys175, His314, and His357 each act as for beta-ketoacyl synthase activity in the active site. The malonyl-CoA:ACP transacylase (MAT) domain stretch occupies residues 575-896 (IFTGQGAQWP…ISTLSRGATG (322 aa)). The active-site For malonyltransferase activity is Ser669. Residues 965 to 1095 (HELLGDLSEE…GQLVVTWGEM (131 aa)) form an N-terminal hotdog fold region. The interval 965–1255 (HELLGDLSEE…EGVHVTPLMQ (291 aa)) is dehydratase (DH) domain. A PKS/mFAS DH domain is found at 965 to 1259 (HELLGDLSEE…VTPLMQPTAS (295 aa)). The Proton acceptor; for dehydratase activity role is filled by His997. Positions 1110–1259 (MSVVDTDEFY…VTPLMQPTAS (150 aa)) are C-terminal hotdog fold. The Proton donor; for dehydratase activity role is filled by Asp1166. The interval 1399-1594 (NLLTRFYDQE…TGFGGVQSIL (196 aa)) is methyltransferase (CMet) domain. Positions 2150-2294 (KTYLLVASRT…RRERNLVGSI (145 aa)) are ketoreductase (KR) domain. Residues 2409–2487 (EAAELVLIAL…DLANSATSKI (79 aa)) enclose the Carrier domain. Residue Ser2447 is modified to O-(pantetheine 4'-phosphoryl)serine.

Requires pantetheine 4'-phosphate as cofactor.

The protein operates within polyketide biosynthesis. In terms of biological role, highly reducing polyketide synthase (HR-PKS); part of the gene cluster that mediates the biosynthesis of aurovertins, fungal polyketides that exhibit potent inhibition of adenosine triphosphate synthase. Tha biosynthesis starts with the HR-PKS aurA that selects propionate as the starter unit; synthesizes a hexa-ene chain through the repeated functions of the KR and DH domains in the first six iterations; selectively introduces three alpha-methyl substitutions at C4, C6, and C16 using the S-adensylmethionine-dependent cMET; and shuts off KR and DH in the last three iterations to afford a 1,3,5-triketo portion that can undergo intramolecular cyclization to yield the alpha-pyrone intermediate. AurE may act as a cyclase and enhances the rate of pyrone formation and product release of aurA. The methyltransferase aurB then methylates the C17 hydroxyl group. C17 methylation is required to initiate epoxidation by the downstream monooxygenase aurC. The monooxygenase aurC and the epoxide hydrolase aurD can iteratively transform the terminal triene portion of the methylated precursor into the dioxabicyclo[3.2.1]octane scaffold of aurovertin E. Epoxidation modifications of the precursor occur in two separate steps; bis-epoxidation of the two terminal olefins takes place first, followed by another epoxidation that occurs at C7-C8 after tetrahydrofuran formation. The O-acyltransferase aurG converts aurovertin E to aurovertin A. The chain is Highly reducing polyketide synthase aurA from Calcarisporium arbuscula (Dendryphion arbuscula).